The sequence spans 101 residues: Apolipoprotein C-II (101 aa).

The first 22 residues, Met-1–Gly-22, serve as a signal peptide directing secretion. Positions Thr-66–Ile-74 are lipid binding. A lipoprotein lipase cofactor region spans residues Ser-78–Gln-101.

It belongs to the apolipoprotein C2 family. In terms of processing, proapolipoprotein C-II is synthesized as a sialic acid containing glycoprotein which is subsequently desialylated prior to its proteolytic processing. Proapolipoprotein C-II, the major form found in plasma undergoes proteolytic cleavage of its N-terminal hexapeptide to generate apolipoprotein C-II, which occurs as the minor form in plasma.

The protein resides in the secreted. In terms of biological role, component of chylomicrons, very low-density lipoproteins (VLDL), low-density lipoproteins (LDL), and high-density lipoproteins (HDL) in plasma. Plays an important role in lipoprotein metabolism as an activator of lipoprotein lipase. Both proapolipoprotein C-II and apolipoprotein C-II can activate lipoprotein lipase. The sequence is that of Apolipoprotein C-II (APOC2) from Phoca vitulina (Harbor seal).